The primary structure comprises 327 residues: Ribose-phosphate pyrophosphokinase (327 aa).

Residue 51–53 participates in ATP binding; that stretch reads DGE. The Mg(2+) site is built by histidine 144 and aspartate 183. Lysine 207 is an active-site residue. D-ribose 5-phosphate-binding positions include arginine 209, aspartate 233, and 237 to 241; that span reads DTGGT.

It belongs to the ribose-phosphate pyrophosphokinase family. Class I subfamily. As to quaternary structure, homohexamer. The cofactor is Mg(2+).

The protein localises to the cytoplasm. The enzyme catalyses D-ribose 5-phosphate + ATP = 5-phospho-alpha-D-ribose 1-diphosphate + AMP + H(+). Its pathway is metabolic intermediate biosynthesis; 5-phospho-alpha-D-ribose 1-diphosphate biosynthesis; 5-phospho-alpha-D-ribose 1-diphosphate from D-ribose 5-phosphate (route I): step 1/1. In terms of biological role, involved in the biosynthesis of the central metabolite phospho-alpha-D-ribosyl-1-pyrophosphate (PRPP) via the transfer of pyrophosphoryl group from ATP to 1-hydroxyl of ribose-5-phosphate (Rib-5-P). This chain is Ribose-phosphate pyrophosphokinase, found in Prochlorococcus marinus (strain SARG / CCMP1375 / SS120).